Consider the following 135-residue polypeptide: Small ribosomal subunit protein uS9 (135 aa).

The segment covering 108–118 (VGDSRRTEPHK) has biased composition (basic and acidic residues). The interval 108–135 (VGDSRRTEPHKPNRSTKGPRAKRQKSYR) is disordered. The span at 119 to 135 (PNRSTKGPRAKRQKSYR) shows a compositional bias: basic residues.

Belongs to the universal ribosomal protein uS9 family. Part of the 30S ribosomal subunit.

The polypeptide is Small ribosomal subunit protein uS9 (Thermococcus kodakarensis (strain ATCC BAA-918 / JCM 12380 / KOD1) (Pyrococcus kodakaraensis (strain KOD1))).